Reading from the N-terminus, the 60-residue chain is uncharacterized protein (60 aa).

This is an uncharacterized protein from Dryophytes versicolor (chameleon treefrog).